We begin with the raw amino-acid sequence, 322 residues long: Short-chain dehydrogenase TIC 32, chloroplastic (322 aa).

NADP(+) is bound by residues 36-42, 88-89, Asn115, and Thr136; these read GASSGIG and DL. Ser170 provides a ligand contact to substrate. Tyr192 acts as the Proton acceptor in catalysis. The tract at residues 298-314 is interaction with calmodulin; that stretch reads DTELAKKVWDFSTKLTD.

This sequence belongs to the short-chain dehydrogenases/reductases (SDR) family. Part of the Tic complex. Interacts with TIC110. In terms of tissue distribution, expressed in leaves and roots.

The protein localises to the plastid. Its subcellular location is the chloroplast inner membrane. Functionally, involved in protein precursor import into chloroplasts. Part of the redox regulon consisting of TIC32, TIC 55 and TIC62. This Arabidopsis thaliana (Mouse-ear cress) protein is Short-chain dehydrogenase TIC 32, chloroplastic.